A 501-amino-acid polypeptide reads, in one-letter code: Dipeptide and tripeptide permease A (501 aa).

Residues 1 to 34 are Cytoplasmic-facing; it reads MSTANNNQPESISMNAFKQPKAFYLIFSIELWER. The helical transmembrane segment at 35-55 threads the bilayer; sequence FGYYGLQGIMAVYLVKMLGMS. Topologically, residues 56–59 are periplasmic; that stretch reads EADS. Residues 60–80 form a helical membrane-spanning segment; the sequence is ITLFSSFSALVYGFVAIGGWL. Topologically, residues 81–89 are cytoplasmic; the sequence is GDKVLGAKR. 2 helical membrane passes run 90-110 and 111-131; these read VIVL…YSGH and EIFW…LFKA. Over 132 to 153 the chain is Periplasmic; sequence NPSSLLSTCYSKDDPRLDGAFT. A helical transmembrane segment spans residues 154–174; it reads MYYMSINIGSFFSMLATPWLA. Topologically, residues 175–178 are cytoplasmic; the sequence is AKYG. The helical transmembrane segment at 179-199 threads the bilayer; it reads WSVAFSLSVVGMLITLVNFWF. Over 200-220 the chain is Periplasmic; the sequence is CRKWVKNQGSKPDFLPLQFKK. The chain crosses the membrane as a helical span at residues 221–241; it reads LLMVLVGIIALITLSNWLLHN. The Cytoplasmic portion of the chain corresponds to 242–246; that stretch reads QIIAR. The helical transmembrane segment at 247-267 threads the bilayer; sequence WALALVSLGIIFIFTKETLFL. Residues 268 to 274 are Periplasmic-facing; it reads QGIARRR. The helical transmembrane segment at 275–295 threads the bilayer; that stretch reads MIVAFLLMLEAVIFFVLYSQM. Residues 296 to 320 lie on the Cytoplasmic side of the membrane; it reads PTSLNFFAIHNVEHSIFGIGFEPEQ. A helical membrane pass occupies residues 321–341; the sequence is FQALNPFWIMLASPILAAIYN. The Periplasmic portion of the chain corresponds to 342–352; the sequence is KMGDRLPMPHK. A helical membrane pass occupies residues 353 to 373; sequence FAFGMMLCSAAFLVLPWGASF. Topologically, residues 374-383 are cytoplasmic; it reads ANEHGIVSVN. A helical transmembrane segment spans residues 384-404; that stretch reads WLILSYALQSIGELMISGLGL. Residues 405–414 lie on the Periplasmic side of the membrane; that stretch reads AMVAQLVPQR. The helical transmembrane segment at 415-435 threads the bilayer; that stretch reads LMGFIMGSWFLTTAAAALIAG. Over 436 to 460 the chain is Cytoplasmic; it reads KVAALTAVPSDAITDAHASLAIYSH. Residues 461–481 traverse the membrane as a helical segment; it reads VFMQIGIVTAIIAVLMMLTAP. The Periplasmic segment spans residues 482 to 501; that stretch reads KLYRMTLAPSDHNDVKIMTQ.

This sequence belongs to the major facilitator superfamily. Proton-dependent oligopeptide transporter (POT/PTR) (TC 2.A.17) family. DtpA subfamily.

The protein resides in the cell inner membrane. Functionally, proton-dependent permease that transports di- and tripeptides. This chain is Dipeptide and tripeptide permease A, found in Yersinia pestis.